Reading from the N-terminus, the 287-residue chain is ATP synthase gamma chain (287 aa).

It belongs to the ATPase gamma chain family. As to quaternary structure, F-type ATPases have 2 components, CF(1) - the catalytic core - and CF(0) - the membrane proton channel. CF(1) has five subunits: alpha(3), beta(3), gamma(1), delta(1), epsilon(1). CF(0) has three main subunits: a, b and c.

The protein localises to the cell inner membrane. In terms of biological role, produces ATP from ADP in the presence of a proton gradient across the membrane. The gamma chain is believed to be important in regulating ATPase activity and the flow of protons through the CF(0) complex. The protein is ATP synthase gamma chain of Colwellia psychrerythraea (strain 34H / ATCC BAA-681) (Vibrio psychroerythus).